Consider the following 101-residue polypeptide: Protein S100-A4 (101 aa).

N-acetylalanine is present on A2. Position 7 is an N6-acetyllysine (K7). EF-hand domains lie at 12 to 47 (MVSTFHKYSGKEGDKFKLNKSELKELLTRELPSFLG) and 50 to 85 (TDEAAFQKLMSNLDSNRDNEVDFQEYCVFLSCIAMM). Ca(2+) is bound by residues K28 and E33. At K35 the chain carries N6-acetyllysine. Ca(2+) is bound by residues D63, N65, D67, E69, and E74.

The protein belongs to the S-100 family. In terms of assembly, homodimer. Interacts with PPFIBP1 in a calcium-dependent mode. Interacts with PGLYRP1; this complex acts as a chemoattractant that promotes lymphocyte movement. Interacts with MYH9; this interaction increases cell motility. Interacts with Annexin 2/ANXA2. Interacts with TP53; this interaction promotes TP53 degradation. Interacts with CCR5. Interacts with FCGR3A; this interaction inhibits PKC-dependent phosphorylation of FCGR3A. Ubiquitously expressed.

The protein localises to the secreted. The protein resides in the nucleus. Its subcellular location is the cytoplasm. Calcium-binding protein that plays a role in various cellular processes including motility, angiogenesis, cell differentiation, apoptosis, and autophagy. Increases cell motility and invasiveness by interacting with non-muscle myosin heavy chain (NMMHC) IIA/MYH9. Mechanistically, promotes filament depolymerization and increases the amount of soluble myosin-IIA, resulting in the formation of stable protrusions facilitating chemotaxis. Also modulates the pro-apoptotic function of TP53 by binding to its C-terminal transactivation domain within the nucleus and reducing its protein levels. Within the extracellular space, stimulates cytokine production including granulocyte colony-stimulating factor and CCL24 from T-lymphocytes. In addition, stimulates T-lymphocyte chemotaxis by acting as a chemoattractant complex with PGLYRP1 that promotes lymphocyte migration via CCR5 and CXCR3 receptors. The chain is Protein S100-A4 (S100A4) from Homo sapiens (Human).